Here is a 302-residue protein sequence, read N- to C-terminus: Light-independent protochlorophyllide reductase iron-sulfur ATP-binding protein (302 aa).

Positions 1-10 (MSTATISPSQ) are enriched in polar residues. A disordered region spans residues 1–21 (MSTATISPSQIGRGARPDGEG). ATP-binding positions include 46–51 (GIGKST) and lysine 75. Serine 50 contacts Mg(2+). [4Fe-4S] cluster contacts are provided by cysteine 131 and cysteine 165. ATP contacts are provided by residues 216–217 (NR) and 240–242 (PAL).

This sequence belongs to the NifH/BchL/ChlL family. Homodimer. Protochlorophyllide reductase is composed of three subunits; BchL, BchN and BchB. Requires [4Fe-4S] cluster as cofactor.

It catalyses the reaction chlorophyllide a + oxidized 2[4Fe-4S]-[ferredoxin] + 2 ADP + 2 phosphate = protochlorophyllide a + reduced 2[4Fe-4S]-[ferredoxin] + 2 ATP + 2 H2O. It functions in the pathway porphyrin-containing compound metabolism; bacteriochlorophyll biosynthesis (light-independent). Functionally, component of the dark-operative protochlorophyllide reductase (DPOR) that uses Mg-ATP and reduced ferredoxin to reduce ring D of protochlorophyllide (Pchlide) to form chlorophyllide a (Chlide). This reaction is light-independent. The L component serves as a unique electron donor to the NB-component of the complex, and binds Mg-ATP. The chain is Light-independent protochlorophyllide reductase iron-sulfur ATP-binding protein from Rubrivivax gelatinosus (strain NBRC 100245 / IL144).